The sequence spans 227 residues: 2-heptyl-1-hydroxyquinolin-4(1H)-one methyltransferase (227 aa).

Belongs to the methyltransferase superfamily. Monomer.

The protein localises to the cytoplasm. It carries out the reaction 2-heptyl-1-hydroxy-4(1H)-quinolinone + S-adenosyl-L-methionine = 2-heptyl-1-methoxy-4(1H)-quinolinone + S-adenosyl-L-homocysteine + H(+). The enzyme catalyses 3-bromo-2-heptyl-1-hydroxy-4(1H)-quinolinone + S-adenosyl-L-methionine = 3-bromo-2-heptyl-1-methoxy-4(1H)-quinolinone + S-adenosyl-L-homocysteine + H(+). In terms of biological role, involved in cellular response to chemical stress and may contribute to resistance toward antimicrobial natural compounds as well as drugs. Catalyzes the methylation and detoxification of the P.aeruginosa toxin 2-heptyl-1-hydroxy-4(1H)-quinolinone (HQNO) to 2-heptyl-1-methoxy-4(1H)-quinolinone (HMOQ). Can also methylate 3-bromo-2-heptyl-1-hydroxy-4(1H)-quinolinone, and shows much lower activity with 1-hydroxyquinolin-4(1H)-one, quercetin, 4-hydroxyquinolin-2(1H)-one (DHQ) and 4-hydroxyisoquinolin-1(2H)-one. This Mycobacteroides abscessus (strain ATCC 19977 / DSM 44196 / CCUG 20993 / CIP 104536 / JCM 13569 / NCTC 13031 / TMC 1543 / L948) (Mycobacterium abscessus) protein is 2-heptyl-1-hydroxyquinolin-4(1H)-one methyltransferase.